The chain runs to 586 residues: Phosphomethylpyrimidine synthase (586 aa).

Disordered regions lie at residues 38-59 (IELS…TSGP) and 92-114 (GREI…VFPQ). Over residues 92-102 (GREIKPEDDGV) the composition is skewed to basic and acidic residues. Residues N193, M222, Y251, H287, 307-309 (SRG), 348-351 (DGLR), and E387 each bind substrate. H391 provides a ligand contact to Zn(2+). Y414 is a substrate binding site. H455 is a binding site for Zn(2+). Residues C535, C538, and C543 each coordinate [4Fe-4S] cluster.

Belongs to the ThiC family. The cofactor is [4Fe-4S] cluster.

The enzyme catalyses 5-amino-1-(5-phospho-beta-D-ribosyl)imidazole + S-adenosyl-L-methionine = 4-amino-2-methyl-5-(phosphooxymethyl)pyrimidine + CO + 5'-deoxyadenosine + formate + L-methionine + 3 H(+). It functions in the pathway cofactor biosynthesis; thiamine diphosphate biosynthesis. In terms of biological role, catalyzes the synthesis of the hydroxymethylpyrimidine phosphate (HMP-P) moiety of thiamine from aminoimidazole ribotide (AIR) in a radical S-adenosyl-L-methionine (SAM)-dependent reaction. The polypeptide is Phosphomethylpyrimidine synthase (Bacillus cytotoxicus (strain DSM 22905 / CIP 110041 / 391-98 / NVH 391-98)).